The following is a 1029-amino-acid chain: Putative B3 domain-containing protein Os03g0621600 (1029 aa).

3 consecutive DNA-binding regions (TF-B3) follow at residues 147 to 240 (DTYF…FDPS), 339 to 430 (VAVM…RKMK), and 450 to 543 (EKYF…FDPS). The tract at residues 572–605 (TSYHDQPKGNKHWMQKDSSSKGNKIGNTRSSNTP) is disordered. The span at 591–605 (SKGNKIGNTRSSNTP) shows a compositional bias: polar residues. Positions 731–824 (YKNFFKVMIG…KLKVLIFGPS (94 aa)) form a DNA-binding region, TF-B3 4. The span at 852–867 (SSNSHDLPVKSPQNVS) shows a compositional bias: polar residues. Residues 852–882 (SSNSHDLPVKSPQNVSKSEKQWDSSEQENDT) form a disordered region. Positions 934-1029 (GCILRKSRVH…SMNVHIIPKK (96 aa)) form a DNA-binding region, TF-B3 5.

The protein resides in the nucleus. This is Putative B3 domain-containing protein Os03g0621600 from Oryza sativa subsp. japonica (Rice).